The following is a 50-amino-acid chain: Small nuclear ribonucleoprotein Sm D2 (50 aa).

A disordered region spans residues 1–36 (MSLLNKPKSEMTPEELQKREEEEFNTGPLSVXTQSX). Position 2 is an N-acetylserine (S2). Residues K6 and K8 each participate in a glycyl lysine isopeptide (Lys-Gly) (interchain with G-Cter in SUMO2) cross-link. Residues 7-21 (PKSEMTPEELQKREE) show a composition bias toward basic and acidic residues. The residue at position 9 (S9) is a Phosphoserine. T12 bears the Phosphothreonine mark.

The protein belongs to the snRNP core protein family. In terms of assembly, core component of the spliceosomal U1, U2, U4 and U5 small nuclear ribonucleoproteins (snRNPs), the building blocks of the spliceosome. Most spliceosomal snRNPs contain a common set of Sm proteins, SNRPB, SNRPD1, SNRPD2, SNRPD3, SNRPE, SNRPF and SNRPG that assemble in a heptameric protein ring on the Sm site of the small nuclear RNA to form the core snRNP. Component of the U1 snRNP. The U1 snRNP is composed of the U1 snRNA and the 7 core Sm proteins SNRPB, SNRPD1, SNRPD2, SNRPD3, SNRPE, SNRPF and SNRPG, and at least three U1 snRNP-specific proteins SNRNP70/U1-70K, SNRPA/U1-A and SNRPC/U1-C. Component of the U4/U6-U5 tri-snRNP complex composed of the U4, U6 and U5 snRNAs and at least PRPF3, PRPF4, PRPF6, PRPF8, PRPF31, SNRNP200, TXNL4A, SNRNP40, SNRPB, SNRPD1, SNRPD2, SNRPD3, SNRPE, SNRPF, SNRPG, DDX23, CD2BP2, PPIH, SNU13, EFTUD2, SART1 and USP39, plus LSM2, LSM3, LSM4, LSM5, LSM6, LSM7 and LSM8. Component of the minor spliceosome, which splices U12-type introns. Part of the SMN-Sm complex that contains SMN1, GEMIN2/SIP1, DDX20/GEMIN3, GEMIN4, GEMIN5, GEMIN6, GEMIN7, GEMIN8, STRAP/UNRIP and the Sm proteins SNRPB, SNRPD1, SNRPD2, SNRPD3, SNRPE, SNRPF and SNRPG; catalyzes core snRNPs assembly. Forms a 6S pICln-Sm complex composed of CLNS1A/pICln, SNRPD1, SNRPD2, SNRPE, SNRPF and SNRPG; ring-like structure where CLNS1A/pICln mimics additional Sm proteins and which is unable to assemble into the core snRNP. Interacts with SMN1; the interaction is direct. Interacts with GEMIN2; the interaction is direct. Interacts with SNRPD1; the interaction is direct. Interacts with SNRPF; the interaction is direct.

It localises to the cytoplasm. It is found in the cytosol. The protein localises to the nucleus. Plays a role in pre-mRNA splicing as a core component of the spliceosomal U1, U2, U4 and U5 small nuclear ribonucleoproteins (snRNPs), the building blocks of the spliceosome. Component of both the pre-catalytic spliceosome B complex and activated spliceosome C complexes. As a component of the minor spliceosome, involved in the splicing of U12-type introns in pre-mRNAs. The polypeptide is Small nuclear ribonucleoprotein Sm D2 (SNRPD2) (Sus scrofa (Pig)).